Here is a 66-residue protein sequence, read N- to C-terminus: Large ribosomal subunit protein bL35 (66 aa).

Residues Met1–Arg16 show a composition bias toward basic residues. The tract at residues Met1–Gly21 is disordered.

Belongs to the bacterial ribosomal protein bL35 family.

This Streptococcus sanguinis (strain SK36) protein is Large ribosomal subunit protein bL35.